The sequence spans 268 residues: Small ribosomal subunit protein eS1 (268 aa).

A disordered region spans residues 1–21 (MAVGKNKGLSKGGKKGGKKKV).

It belongs to the eukaryotic ribosomal protein eS1 family. Component of the small ribosomal subunit. Mature ribosomes consist of a small (40S) and a large (60S) subunit. The 40S subunit contains about 33 different proteins and 1 molecule of RNA (18S). The 60S subunit contains about 49 different proteins and 3 molecules of RNA (28S, 5.8S and 5S).

It is found in the cytoplasm. Its function is as follows. Essential for oogenesis; required for late follicle cell development. This Drosophila persimilis (Fruit fly) protein is Small ribosomal subunit protein eS1.